Reading from the N-terminus, the 285-residue chain is Acetyl-coenzyme A carboxylase carboxyl transferase subunit beta 2 (285 aa).

The interval 1–20 (MAIRSLFSGNRKKKEDGQEK) is disordered. The CoA carboxyltransferase N-terminal domain maps to 26–285 (LMTKCPECRH…MHTKGGVQHV (260 aa)). Positions 30, 33, 49, and 52 each coordinate Zn(2+). A C4-type zinc finger spans residues 30 to 52 (CPECRHIQLTKELEKNHKVCTKC).

This sequence belongs to the AccD/PCCB family. In terms of assembly, acetyl-CoA carboxylase is a heterohexamer composed of biotin carboxyl carrier protein (AccB), biotin carboxylase (AccC) and two subunits each of ACCase subunit alpha (AccA) and ACCase subunit beta (AccD). The cofactor is Zn(2+).

Its subcellular location is the cytoplasm. It catalyses the reaction N(6)-carboxybiotinyl-L-lysyl-[protein] + acetyl-CoA = N(6)-biotinyl-L-lysyl-[protein] + malonyl-CoA. Its pathway is lipid metabolism; malonyl-CoA biosynthesis; malonyl-CoA from acetyl-CoA: step 1/1. Component of the acetyl coenzyme A carboxylase (ACC) complex. Biotin carboxylase (BC) catalyzes the carboxylation of biotin on its carrier protein (BCCP) and then the CO(2) group is transferred by the transcarboxylase to acetyl-CoA to form malonyl-CoA. This chain is Acetyl-coenzyme A carboxylase carboxyl transferase subunit beta 2, found in Lysinibacillus sphaericus (strain C3-41).